A 201-amino-acid chain; its full sequence is Probable DNA replication complex GINS protein PSF1 (201 aa).

Belongs to the GINS1/PSF1 family. In terms of assembly, component of the GINS complex which is a heterotetramer of gins1, gins2, gins3 and gins4.

The protein resides in the nucleus. Its function is as follows. The GINS complex plays an essential role in the initiation of DNA replication. The sequence is that of Probable DNA replication complex GINS protein PSF1 from Caenorhabditis briggsae.